We begin with the raw amino-acid sequence, 494 residues long: Integrin beta-like protein 1 (494 aa).

An N-terminal signal peptide occupies residues 1-23; that stretch reads MRPPGFRNFLLLASSLLFAGLSA. 40 disulfides stabilise this stretch: cysteine 40/cysteine 71, cysteine 51/cysteine 69, cysteine 63/cysteine 74, cysteine 76/cysteine 89, cysteine 91/cysteine 112, cysteine 96/cysteine 110, cysteine 104/cysteine 115, cysteine 117/cysteine 126, cysteine 132/cysteine 159, cysteine 143/cysteine 157, cysteine 151/cysteine 162, cysteine 164/cysteine 178, cysteine 180/cysteine 202, cysteine 185/cysteine 200, cysteine 194/cysteine 205, cysteine 207/cysteine 216, cysteine 220/cysteine 247, cysteine 231/cysteine 245, cysteine 239/cysteine 250, cysteine 252/cysteine 269, cysteine 271/cysteine 296, cysteine 276/cysteine 294, cysteine 288/cysteine 299, cysteine 301/cysteine 310, cysteine 316/cysteine 343, cysteine 327/cysteine 341, cysteine 335/cysteine 346, cysteine 348/cysteine 361, cysteine 363/cysteine 384, cysteine 368/cysteine 382, cysteine 376/cysteine 387, cysteine 389/cysteine 398, cysteine 404/cysteine 431, cysteine 415/cysteine 429, cysteine 423/cysteine 434, cysteine 436/cysteine 448, cysteine 450/cysteine 471, cysteine 455/cysteine 469, cysteine 463/cysteine 474, and cysteine 476/cysteine 485. I-EGF domains follow at residues 40 to 90, 91 to 127, 132 to 179, 180 to 217, 220 to 270, 271 to 311, 316 to 362, 363 to 399, 404 to 449, and 450 to 486; these read CRLS…PLCE, CHEWVCETYDGSTCAGHGKCDCGKCKCDQGWYGDACQ, CDLT…KFCE, CDDRECIDDETEEICGGHGKCYCGNCYCKAGWHGDKCE, CDIT…DTCE, CDER…KKCE, CTLS…KTCE, CDDRRCEDLDGVVCGGHGTCSCGRCVCERGWFGKLCQ, CNMT…EFCD, and CDDRDCDKHDGLICTGNGICSCGNCECWDGWNGNACE. The stretch at 51-95 is one I repeat; sequence CRAPGQPPGAALCHGRGRCDCGVCICHVTEPGMFFGPLCECHEWV. Positions 51–494 are cysteine-rich tandem repeats; that stretch reads CRAPGQPPGA…CEIWLGSEYP (444 aa). The II repeat unit spans residues 96–142; it reads CETYDGSTCAGHGKCDCGKCKCDQGWYGDACQYPTNCDLTKKKSNQM. The stretch at 143–184 is one III repeat; that stretch reads CKNSQDIICSNAGTCHCGRCKCDNSDGSGLVYGKFCECDDRE. Residues 185–230 form an IV repeat; the sequence is CIDDETEEICGGHGKCYCGNCYCKAGWHGDKCEFQCDITPWESKRR. A V repeat occupies 231 to 275; that stretch reads CTSPDGKICSNRGTCVCGECTCHDVDPTGDWGDIHGDTCECDERD. Residues 276–326 form a VI repeat; it reads CRAVYDRYSDDFCSGHGQCNCGRCDCKAGWYGKKCEHPQSCTLSAEESIRK. Residues 327–367 form a VII repeat; the sequence is CQGSSDLPCSGRGKCECGKCTCYPPGDRRVYGKTCECDDRR. The VIII repeat unit spans residues 368–414; sequence CEDLDGVVCGGHGTCSCGRCVCERGWFGKLCQHPRKCNMTEEQSKNL. N-linked (GlcNAc...) asparagine glycosylation is present at asparagine 405. The IX repeat unit spans residues 415–454; it reads CESADGILCSGKGSCHCGKCICSAEEWYISGEFCDCDDRD. A X repeat occupies 455–494; sequence CDKHDGLICTGNGICSCGNCECWDGWNGNACEIWLGSEYP.

As to expression, widely expressed in many tissues, but readily detectable only in aorta.

It localises to the secreted. In Homo sapiens (Human), this protein is Integrin beta-like protein 1 (ITGBL1).